Here is a 76-residue protein sequence, read N- to C-terminus: Sec-independent protein translocase protein TatA (76 aa).

A helical membrane pass occupies residues 1–21 (MGGISIWQLLIIALIVVLLFG). The tract at residues 43 to 76 (MSSEDEKKAIEDTSAEKTAQTEEKKTESKDKEQA) is disordered. Residues 46–76 (EDEKKAIEDTSAEKTAQTEEKKTESKDKEQA) are compositionally biased toward basic and acidic residues.

The protein belongs to the TatA/E family. In terms of assembly, the Tat system comprises two distinct complexes: a TatABC complex, containing multiple copies of TatA, TatB and TatC subunits, and a separate TatA complex, containing only TatA subunits. Substrates initially bind to the TatABC complex, which probably triggers association of the separate TatA complex to form the active translocon.

Its subcellular location is the cell inner membrane. Part of the twin-arginine translocation (Tat) system that transports large folded proteins containing a characteristic twin-arginine motif in their signal peptide across membranes. TatA could form the protein-conducting channel of the Tat system. The protein is Sec-independent protein translocase protein TatA of Shewanella loihica (strain ATCC BAA-1088 / PV-4).